The chain runs to 200 residues: Endoribonuclease YbeY (200 aa).

Pro residues predominate over residues 1–18; that stretch reads MPADPALPDPVPPGPTAP. The disordered stretch occupies residues 1 to 22; sequence MPADPALPDPVPPGPTAPVPTD. H151, H155, and H161 together coordinate Zn(2+).

Belongs to the endoribonuclease YbeY family. Requires Zn(2+) as cofactor.

The protein resides in the cytoplasm. Single strand-specific metallo-endoribonuclease involved in late-stage 70S ribosome quality control and in maturation of the 3' terminus of the 16S rRNA. The protein is Endoribonuclease YbeY of Rhodospirillum rubrum (strain ATCC 11170 / ATH 1.1.1 / DSM 467 / LMG 4362 / NCIMB 8255 / S1).